The primary structure comprises 24 residues: Cytochrome c oxidase subunit 7A2, mitochondrial (24 aa).

Over residues 1 to 13 the composition is skewed to basic and acidic residues; it reads FENKVPEKQKLFQ. Positions 1–24 are disordered; it reads FENKVPEKQKLFQEDNGIPVHLKG. An N6-acetyllysine modification is found at Lys-10.

It belongs to the cytochrome c oxidase VIIa family. Component of the cytochrome c oxidase (complex IV, CIV), a multisubunit enzyme composed of 14 subunits. The complex is composed of a catalytic core of 3 subunits MT-CO1, MT-CO2 and MT-CO3, encoded in the mitochondrial DNA, and 11 supernumerary subunits COX4I, COX5A, COX5B, COX6A, COX6B, COX6C, COX7A, COX7B, COX7C, COX8 and NDUFA4, which are encoded in the nuclear genome. The complex exists as a monomer or a dimer and forms supercomplexes (SCs) in the inner mitochondrial membrane with NADH-ubiquinone oxidoreductase (complex I, CI) and ubiquinol-cytochrome c oxidoreductase (cytochrome b-c1 complex, complex III, CIII), resulting in different assemblies (supercomplex SCI(1)III(2)IV(1) and megacomplex MCI(2)III(2)IV(2)). Interacts with PET100.

Its subcellular location is the mitochondrion inner membrane. The protein operates within energy metabolism; oxidative phosphorylation. Functionally, component of the cytochrome c oxidase, the last enzyme in the mitochondrial electron transport chain which drives oxidative phosphorylation. The respiratory chain contains 3 multisubunit complexes succinate dehydrogenase (complex II, CII), ubiquinol-cytochrome c oxidoreductase (cytochrome b-c1 complex, complex III, CIII) and cytochrome c oxidase (complex IV, CIV), that cooperate to transfer electrons derived from NADH and succinate to molecular oxygen, creating an electrochemical gradient over the inner membrane that drives transmembrane transport and the ATP synthase. Cytochrome c oxidase is the component of the respiratory chain that catalyzes the reduction of oxygen to water. Electrons originating from reduced cytochrome c in the intermembrane space (IMS) are transferred via the dinuclear copper A center (CU(A)) of subunit 2 and heme A of subunit 1 to the active site in subunit 1, a binuclear center (BNC) formed by heme A3 and copper B (CU(B)). The BNC reduces molecular oxygen to 2 water molecules using 4 electrons from cytochrome c in the IMS and 4 protons from the mitochondrial matrix. The sequence is that of Cytochrome c oxidase subunit 7A2, mitochondrial (COX7A2) from Ovis aries (Sheep).